A 296-amino-acid chain; its full sequence is MFSGSIPALVTPFRDGAFDEKAFRRLVDWQIENGSSALVPCGTTGEASTLSNAEHHRVIEVCVEQAAGRVPVIAGCGSNDTMNALLHMNFSKKCGAQAALCVAPYYNRPSQAGIIAHFSYLAEHNDLPIVLYNVPGRTVTDILPETVCELAKRYPDKIIGIKDASGDLSRVTDHRMGIGKHFCQLSGDDELALPANAAGAVGCISVTANVAPRLCADFQAACAANDLEKARELNDKLYPLHYAMFEDASPGPVKYALSRVFADINEDLRLPMVPCNEAARKAVDAALVHAGLLELA.

T44 lines the pyruvate pocket. Y132 serves as the catalytic Proton donor/acceptor. The active-site Schiff-base intermediate with substrate is K162. Position 204 (I204) interacts with pyruvate.

It belongs to the DapA family. As to quaternary structure, homotetramer; dimer of dimers.

It localises to the cytoplasm. The enzyme catalyses L-aspartate 4-semialdehyde + pyruvate = (2S,4S)-4-hydroxy-2,3,4,5-tetrahydrodipicolinate + H2O + H(+). Its pathway is amino-acid biosynthesis; L-lysine biosynthesis via DAP pathway; (S)-tetrahydrodipicolinate from L-aspartate: step 3/4. Functionally, catalyzes the condensation of (S)-aspartate-beta-semialdehyde [(S)-ASA] and pyruvate to 4-hydroxy-tetrahydrodipicolinate (HTPA). The chain is 4-hydroxy-tetrahydrodipicolinate synthase from Novosphingobium aromaticivorans (strain ATCC 700278 / DSM 12444 / CCUG 56034 / CIP 105152 / NBRC 16084 / F199).